The primary structure comprises 276 residues: Probable ribose-5-phosphate isomerase 3, chloroplastic (276 aa).

A chloroplast-targeting transit peptide spans 1-39; that stretch reads MASLSFVSSSHLTLRTPSIALRSTGSSPRTSVSFSVKAQ. An N-acetylserine modification is found at Ser-40. A Phosphoserine modification is found at Ser-108.

The protein belongs to the ribose 5-phosphate isomerase family. In terms of processing, phosphorylated by SRK2C.

Its subcellular location is the plastid. The protein localises to the chloroplast. The enzyme catalyses aldehydo-D-ribose 5-phosphate = D-ribulose 5-phosphate. It participates in carbohydrate degradation; pentose phosphate pathway; D-ribose 5-phosphate from D-ribulose 5-phosphate (non-oxidative stage): step 1/1. Its function is as follows. Catalyzes the reversible conversion of ribose-5-phosphate to ribulose 5-phosphate. This is Probable ribose-5-phosphate isomerase 3, chloroplastic (RPI3) from Arabidopsis thaliana (Mouse-ear cress).